The primary structure comprises 236 residues: NAD(P)H-hydrate epimerase (236 aa).

A YjeF N-terminal domain is found at 11-217; the sequence is AAALDRELMS…SIAKKYDFDV (207 aa). (6S)-NADPHX is bound at residue 61-65; it reads NNGGD. 2 residues coordinate K(+): Asn-62 and Asp-123. (6S)-NADPHX-binding positions include 127–133 and Asp-156; that span reads GFSFSGE. Ser-159 lines the K(+) pocket.

It belongs to the NnrE/AIBP family. Requires K(+) as cofactor.

Its subcellular location is the cytoplasm. The protein resides in the mitochondrion. The enzyme catalyses (6R)-NADHX = (6S)-NADHX. It carries out the reaction (6R)-NADPHX = (6S)-NADPHX. Functionally, catalyzes the epimerization of the S- and R-forms of NAD(P)HX, a damaged form of NAD(P)H that is a result of enzymatic or heat-dependent hydration. This is a prerequisite for the S-specific NAD(P)H-hydrate dehydratase to allow the repair of both epimers of NAD(P)HX. In Neurospora crassa (strain ATCC 24698 / 74-OR23-1A / CBS 708.71 / DSM 1257 / FGSC 987), this protein is NAD(P)H-hydrate epimerase.